The following is a 142-amino-acid chain: Small ribosomal subunit protein uS9 (142 aa).

The protein belongs to the universal ribosomal protein uS9 family.

It localises to the cytoplasm. The protein is Small ribosomal subunit protein uS9 (RPS16) of Syntrichia ruralis (Great hairy screw-moss).